Consider the following 63-residue polypeptide: Cecropin-2 (63 aa).

Residues 1 to 23 form the signal peptide; that stretch reads MNFYKVFIFVALILAISLGQSEA. R62 carries the post-translational modification Arginine amide.

This sequence belongs to the cecropin family.

Its subcellular location is the secreted. Cecropins have lytic and antibacterial activity against several Gram-positive and Gram-negative bacteria. The protein is Cecropin-2 (Cec2A) of Drosophila virilis (Fruit fly).